A 469-amino-acid polypeptide reads, in one-letter code: Uridine kinase-like protein 4 (469 aa).

The segment at 46–249 (QRQPFVIGVA…IVQHICTKLG (204 aa)) is uridine kinase. Positions 259 to 469 (NLYVIHSTFQ…GDRYFGTDDD (211 aa)) are uracil phosphoribosyltransferase. GTP-binding positions include lysine 283, arginine 292, and 326 to 329 (CKRL). Positions 336 and 361 each coordinate 5-phospho-alpha-D-ribose 1-diphosphate. A GTP-binding site is contributed by arginine 381. 5-phospho-alpha-D-ribose 1-diphosphate is bound by residues aspartate 387, 392-395 (TGNS), and glutamate 458. 457–459 (GEF) contributes to the uracil binding site.

It in the N-terminal section; belongs to the uridine kinase family. This sequence in the C-terminal section; belongs to the UPRTase family. Mg(2+) is required as a cofactor.

It carries out the reaction UMP + diphosphate = 5-phospho-alpha-D-ribose 1-diphosphate + uracil. The enzyme catalyses cytidine + ATP = CMP + ADP + H(+). It catalyses the reaction uridine + ATP = UMP + ADP + H(+). It functions in the pathway pyrimidine metabolism; UMP biosynthesis via salvage pathway; UMP from uracil: step 1/1. It participates in pyrimidine metabolism; CTP biosynthesis via salvage pathway; CTP from cytidine: step 1/3. The protein operates within pyrimidine metabolism; UMP biosynthesis via salvage pathway; UMP from uridine: step 1/1. Allosterically activated by GTP. In terms of biological role, involved in the pyrimidine salvage pathway. The uracil phosphoribosyltransferase (UPRT) activity, that catalyzes the conversion of uracil and 5-phospho-alpha-D-ribose 1-diphosphate (PRPP) to UMP and diphosphate, is unsure. The chain is Uridine kinase-like protein 4 (UKL4) from Arabidopsis thaliana (Mouse-ear cress).